Reading from the N-terminus, the 208-residue chain is Probable nicotinate-nucleotide adenylyltransferase (208 aa).

This sequence belongs to the NadD family.

The enzyme catalyses nicotinate beta-D-ribonucleotide + ATP + H(+) = deamido-NAD(+) + diphosphate. Its pathway is cofactor biosynthesis; NAD(+) biosynthesis; deamido-NAD(+) from nicotinate D-ribonucleotide: step 1/1. In terms of biological role, catalyzes the reversible adenylation of nicotinate mononucleotide (NaMN) to nicotinic acid adenine dinucleotide (NaAD). The polypeptide is Probable nicotinate-nucleotide adenylyltransferase (Kineococcus radiotolerans (strain ATCC BAA-149 / DSM 14245 / SRS30216)).